The primary structure comprises 2032 residues: Transient receptor potential channel (2032 aa).

A compositionally biased stretch (basic residues) spans 129–139 (KKTRKHRRRRS). Disordered regions lie at residues 129 to 162 (KKTR…GHAI), 197 to 223 (QSKG…AVPT), 831 to 860 (KKAM…MGGV), 912 to 945 (ANPM…GSQT), and 1120 to 1211 (AAEH…EAGN). Composition is skewed to polar residues over residues 839-855 (SRPS…QSTE), 935-945 (SLTSASDGSQT), and 1120-1129 (AAEHQNDMNY). Positions 1130–1149 (SSSSSSSSSSSSSSSSSDSS) are enriched in low complexity. Residues 1171 to 1185 (TSQGSAQSLNITSLF) are compositionally biased toward polar residues. 5 consecutive transmembrane segments (helical) span residues 1310 to 1330 (FWSW…TLLV), 1332 to 1352 (TPPR…AFGL), 1374 to 1394 (VCSF…VGFF), 1439 to 1459 (MIQN…SFGL), and 1535 to 1555 (LMTF…IAIF). Disordered stretches follow at residues 1753–1779 (GTDP…RIRR), 1853–1909 (HPER…SRDQ), 1935–1982 (EEED…EEVD), and 1999–2032 (LNEE…CSDV). The segment covering 1935-1947 (EEEDEEEDDEEDD) has biased composition (acidic residues). Residues 1951–1962 (RHHIHPRRKSSR) are compositionally biased toward basic residues. Over residues 2016–2032 (SPSSSRADLTSQKCSDV) the composition is skewed to polar residues.

It belongs to the transient receptor (TC 1.A.4) family. LTrpC subfamily. As to expression, gonads.

It is found in the membrane. In terms of biological role, required for initiation and continuation of postembryonic mitotic cell divisions of gonadal cells Z1 and Z4. Zygotic expression is necessary for hermaphrodite fertility. May be a cation channel. The sequence is that of Transient receptor potential channel (gon-2) from Caenorhabditis elegans.